A 429-amino-acid chain; its full sequence is Ribosomal RNA small subunit methyltransferase B (429 aa).

Residues 254-260 (CAAPGGK), Asp-277, Asp-303, and Asp-322 contribute to the S-adenosyl-L-methionine site. The Nucleophile role is filled by Cys-375.

It belongs to the class I-like SAM-binding methyltransferase superfamily. RsmB/NOP family.

The protein localises to the cytoplasm. It carries out the reaction cytidine(967) in 16S rRNA + S-adenosyl-L-methionine = 5-methylcytidine(967) in 16S rRNA + S-adenosyl-L-homocysteine + H(+). Specifically methylates the cytosine at position 967 (m5C967) of 16S rRNA. In Escherichia coli O157:H7, this protein is Ribosomal RNA small subunit methyltransferase B.